Reading from the N-terminus, the 1038-residue chain is Ubiquitin carboxyl-terminal hydrolase 36 (1038 aa).

Disordered stretches follow at residues 22-44 (LGGN…TNGS) and 107-148 (ANGH…PKPK). Residues 23–44 (GGNSSAGSSTDQAKSGEDTNGS) show a composition bias toward polar residues. Positions 172–480 (TGMINVGNTC…NAYIMFFELD (309 aa)) constitute a USP domain. The active-site Nucleophile is Cys181. The active-site Proton acceptor is the His439. Disordered stretches follow at residues 487 to 794 (PAAN…SKTG), 818 to 881 (GSPV…SNGS), 912 to 985 (LLVD…YNQN), and 1000 to 1038 (RFGG…QQQT). Low complexity-rich tracts occupy residues 502–517 (STTP…PSPT), 546–559 (QQNQ…LQLG), and 587–606 (NGNK…KSIN). A phosphoserine mark is found at Ser513 and Ser515. Residues 629-641 (TTAQLPSMPNMTE) show a composition bias toward polar residues. Residues Thr658 and Thr662 each carry the phosphothreonine modification. A phosphoserine mark is found at Ser672 and Ser674. Over residues 703-728 (TNGHSKTNGSHTNGSASSSVHVNNSK) the composition is skewed to polar residues. Residues 729 to 746 (QKTDAIDEIFKSLKKSAD) are compositionally biased toward basic and acidic residues. Ser747 bears the Phosphoserine mark. The span at 747–756 (SDEDDDEEEP) shows a compositional bias: acidic residues. Positions 766–776 (PQKQSQSQSKA) are enriched in low complexity. Residues 777 to 786 (PPSPKTPPSP) show a composition bias toward pro residues. Ser779 is subject to Phosphoserine. Phosphothreonine is present on Thr782. Residues Ser785 and Ser819 each carry the phosphoserine modification. Thr825 carries the post-translational modification Phosphothreonine. Over residues 832-844 (NPFSSSKPSTDSP) the composition is skewed to polar residues. Position 843 is a phosphoserine (Ser843). Thr846 is modified (phosphothreonine). Residues 859–881 (ALKSHQQPRVGNGYQSNATSNGS) are compositionally biased toward polar residues. Positions 912-923 (LLVDAREQRQRD) are enriched in basic and acidic residues. The span at 942 to 953 (SGSAKGNNASNS) shows a compositional bias: low complexity.

It belongs to the peptidase C19 family. Interacts with atms/PAF1, but not with CycT. Interacts (via C-terminus) with imd (via N-terminus).

It is found in the nucleus. The protein resides in the nucleolus. Its subcellular location is the cytoplasm. The catalysed reaction is Thiol-dependent hydrolysis of ester, thioester, amide, peptide and isopeptide bonds formed by the C-terminal Gly of ubiquitin (a 76-residue protein attached to proteins as an intracellular targeting signal).. Hydrolase that deubiquitinates polyubiquitinated target proteins including imd. Required for preventing the constitutive activation of the imd/NF-kappa-B (Imd) signaling cascade under unchalleneged conditions. Deubiquitinates imd linked 'Lys-63' chains which leads its proteasomal degradation and consequently down-regulation of the Imd signaling cascade. Removal of the activating 'Lys-63'-linked chains is likely to enable their replacement with 'Lys-48'-linked chains which act as 'tags' the for proteasomal degradation of imd. Required for maintaining multiple types of adult stem cells, including male and female germline, epithelial follicle cell and intestinal stem cells. May function as a transcriptional repressor by continually deubiquiting histone H2B at the promoters of genes critical for cellular differentiation, thereby preventing histone H3 'Lys-4' trimethylation (H3K4me3). Controls selective autophagy activation by ubiquitinated proteins. This chain is Ubiquitin carboxyl-terminal hydrolase 36 (scny), found in Drosophila melanogaster (Fruit fly).